The following is a 288-amino-acid chain: uncharacterized protein (288 aa).

The N-terminal stretch at 1 to 27 is a signal peptide; the sequence is MKFEFRTLVLISLAVVVVLSGCSQSPS. The interval 144 to 167 is disordered; it reads GESGEAGGAGEQLPASDQASGEEP.

This is an uncharacterized protein from Archaeoglobus fulgidus (strain ATCC 49558 / DSM 4304 / JCM 9628 / NBRC 100126 / VC-16).